Consider the following 520-residue polypeptide: Ubiquitin carboxyl-terminal hydrolase MINDY-1 (520 aa).

A disordered region spans residues M1–M155. Over residues K26–K37 the composition is skewed to basic and acidic residues. Positions T43–K54 are enriched in polar residues. Positions A77–K86 are enriched in low complexity. Composition is skewed to polar residues over residues V93–M112 and S132–E146. The active-site Nucleophile is C189. H371 serves as the catalytic Proton acceptor. 2 disordered regions span residues S422–Q441 and E467–L520. Residues Q441–Q479 are ubiquitin-binding domain (UBD). Low complexity predominate over residues A469–Q498. The span at K511–L520 shows a compositional bias: basic and acidic residues.

Belongs to the MINDY deubiquitinase family. FAM63 subfamily.

The enzyme catalyses Thiol-dependent hydrolysis of ester, thioester, amide, peptide and isopeptide bonds formed by the C-terminal Gly of ubiquitin (a 76-residue protein attached to proteins as an intracellular targeting signal).. Functionally, hydrolase that can specifically remove 'Lys-48'-linked conjugated ubiquitin from proteins. May play a regulatory role at the level of protein turnover. In Danio rerio (Zebrafish), this protein is Ubiquitin carboxyl-terminal hydrolase MINDY-1 (mindy1).